The chain runs to 425 residues: NAD kinase 2, mitochondrial (425 aa).

A mitochondrion-targeting transit peptide spans 1-45 (MDTSAIQQTLVKIYQRQAWQPPRKASKNETTVGKPRELAGGGSPA). Residues 20 to 46 (QPPRKASKNETTVGKPRELAGGGSPAD) are disordered. An N6-acetyllysine; alternate modification is found at Lys59. Lys59 carries the N6-succinyllysine; alternate modification. Ser171 bears the Phosphoserine mark. Lys285 carries the post-translational modification N6-succinyllysine. Residue Lys300 is modified to N6-acetyllysine; alternate. Lys300 is modified (N6-succinyllysine; alternate). Phosphoserine is present on Ser350. N6-acetyllysine is present on Lys380.

It belongs to the NAD kinase family. Homodimer.

The protein localises to the mitochondrion. The catalysed reaction is NAD(+) + ATP = ADP + NADP(+) + H(+). Inhibited by NADH, NADPH and NADP(+). Its function is as follows. Mitochondrial NAD(+) kinase that phosphorylates NAD(+) to yield NADP(+). Can use both ATP or inorganic polyphosphate as the phosphoryl donor. This chain is NAD kinase 2, mitochondrial (Nadk2), found in Rattus norvegicus (Rat).